Reading from the N-terminus, the 446-residue chain is tRNA modification GTPase MnmE (446 aa).

(6S)-5-formyl-5,6,7,8-tetrahydrofolate-binding residues include arginine 24, glutamate 81, and lysine 120. Positions 216–368 (GLHAVLIGPP…LHIRLRELAL (153 aa)) constitute a TrmE-type G domain. Residue asparagine 226 coordinates K(+). Residues 226 to 231 (NAGKSS), 245 to 251 (TDVAGTT), and 270 to 273 (DTAG) contribute to the GTP site. Serine 230 provides a ligand contact to Mg(2+). K(+) contacts are provided by threonine 245, valine 247, and threonine 250. Threonine 251 contributes to the Mg(2+) binding site. Residue lysine 446 coordinates (6S)-5-formyl-5,6,7,8-tetrahydrofolate.

The protein belongs to the TRAFAC class TrmE-Era-EngA-EngB-Septin-like GTPase superfamily. TrmE GTPase family. Homodimer. Heterotetramer of two MnmE and two MnmG subunits. K(+) serves as cofactor.

It is found in the cytoplasm. In terms of biological role, exhibits a very high intrinsic GTPase hydrolysis rate. Involved in the addition of a carboxymethylaminomethyl (cmnm) group at the wobble position (U34) of certain tRNAs, forming tRNA-cmnm(5)s(2)U34. The polypeptide is tRNA modification GTPase MnmE (Xanthomonas oryzae pv. oryzae (strain PXO99A)).